The sequence spans 662 residues: Polyunsaturated fatty acid lipoxygenase ALOX15 (662 aa).

The 113-residue stretch at 2–114 folds into the PLAT domain; the sequence is GLYRIRVSTG…VLSLPEGTGR (113 aa). Positions 115-662 constitute a Lipoxygenase domain; sequence TVGDDPQGLF…PSIVENSVAI (548 aa). 5 residues coordinate Fe cation: His-360, His-365, His-540, His-544, and Ile-662.

Belongs to the lipoxygenase family. Interacts with PEBP1; in response to IL13/interleukin-13, prevents the interaction of PEBP1 with RAF1 to activate the ERK signaling cascade. It depends on Fe cation as a cofactor.

It localises to the cytoplasm. It is found in the cytosol. Its subcellular location is the cell membrane. The protein localises to the lipid droplet. The catalysed reaction is (5Z,8Z,11Z,14Z)-eicosatetraenoate + O2 = (12S)-hydroperoxy-(5Z,8Z,10E,14Z)-eicosatetraenoate. It catalyses the reaction (9Z,12Z)-octadecadienoate + O2 = (13S)-hydroperoxy-(9Z,11E)-octadecadienoate. The enzyme catalyses (5Z,8Z,11Z,14Z)-eicosatetraenoate + O2 = (15S)-hydroperoxy-(5Z,8Z,11Z,13E)-eicosatetraenoate. It carries out the reaction (5Z,8Z,11Z,14Z)-eicosatetraenoate + 2 O2 = (14R,15S)-dihydroperoxy-(5Z,8Z,10E,12E)-eicosatetraenoate. The catalysed reaction is (5Z,8Z,11Z,14Z)-eicosatetraenoate + 2 O2 = (8S,15S)-dihydroperoxy-(5Z,9E,11Z,13E)-eicosatetraenoate. It catalyses the reaction (14S,15R)-epoxy-(5Z,8Z,11Z)-eicosatrienoate + O2 = (8S)-hydroperoxy-(14S,15R)-epoxy-(5Z,9E,11Z)-eicosatrienoate. The enzyme catalyses (14S,15R)-epoxy-(5Z,8Z,11Z)-eicosatrienoate + O2 = (12S)-hydroperoxy-(14S,15R)-epoxy-(5Z,8Z,10E)-eicosatrienoate. It carries out the reaction (14R,15S)-epoxy-(5Z,8Z,11Z)-eicosatrienoate + O2 = (5S)-hydroperoxy-(14R,15S)-epoxy-(6E,8Z,11Z)-eicosatrienoate. The catalysed reaction is (14R,15S)-epoxy-(5Z,8Z,11Z)-eicosatrienoate + O2 = (12S)-hydroperoxy-(14R,15S)-epoxy-(5Z,8Z,10E)-eicosatrienoate. It catalyses the reaction (15R)-hydroperoxy-(5Z,8Z,11Z,13E)-eicosatetraenoate = 15-oxo-(5Z,8Z,11Z,13E)-eicosatetraenoate + H2O. The enzyme catalyses (15S)-hydroperoxy-(5Z,8Z,11Z,13E)-eicosatetraenoate = (14S,15S)-epoxy-(5Z,8Z,10E,12E)-eicosatetraenoate + H2O. It carries out the reaction (12S)-hydroperoxy-(5Z,8Z,10E,14Z)-eicosatetraenoate = (8S)-hydroxy-(11S,12S)-epoxy-(5Z,9E,14Z)-eicosatrienoate. The catalysed reaction is (4Z,7Z,10Z,13Z,16Z)-docosapentaenoate + O2 = 14-hydroperoxy-(4Z,7Z,10Z,12E,16Z)-docosapentaenoate. It catalyses the reaction (7Z,10Z,13Z,16Z,19Z)-docosapentaenoate + O2 = 14-hydroperoxy-(7Z,10Z,12E,16Z,19Z)-docosapentaenoate. The enzyme catalyses (4Z,7Z,10Z,13Z,16Z,19Z)-docosahexaenoate + O2 = (14S)-hydroperoxy-(4Z,7Z,10Z,12E,16Z,19Z)-docosahexaenoate. It carries out the reaction (4Z,7Z,10Z,13Z,16Z,19Z)-docosahexaenoate + O2 = (17S)-hydroperoxy-(4Z,7Z,10Z,13Z,15E,19Z)-docosahexaenoate. The catalysed reaction is (7S)-hydroperoxy-(4Z,8E,10Z,13Z,16Z,19Z)-docosahexaenoate + O2 = (7S,14S)-dihydroperoxy-(4Z,8E,10Z,12E,16Z,19Z)-docosahexaenoate. It catalyses the reaction (7S)-hydroperoxy-(4Z,8E,10Z,13Z,16Z,19Z)-docosahexaenoate + O2 = (7S,17S)-dihydroperoxy-(4Z,8E,10Z,13Z,15E,19Z)-docosahexaenoate. The enzyme catalyses (4Z,7Z,10Z,13Z,16Z,19Z)-docosahexaenoate + O2 = (11S)-hydroperoxy-(4Z,7Z,9E,13Z,16Z,19Z)-docosahexaenoate. It carries out the reaction N-(5Z,8Z,11Z,14Z)-eicosatetraenoyl-taurine + O2 = N-(12S)-hydroperoxy-(5Z,8Z,10E,14Z)-eicosatetraenoyl-taurine. The catalysed reaction is N-(5Z,8Z,11Z,14Z)-eicosatetraenoyl-gamma-aminobutanoate + O2 = N-(12S)-hydroperoxy-(5Z,8Z,10E,14Z)-eicosatetraenoyl-gamma-aminobutanoate. It catalyses the reaction N-(5Z,8Z,11Z,14Z)-eicosatetraenoyl-glycine + O2 = N-(12S)-hydroperoxy-(5Z,8Z,10E,14Z)-eicosatetraenoyl-glycine. The enzyme catalyses N-(5Z,8Z,11Z,14Z)-eicosatetraenoyl-L-alanine + O2 = N-(12S)-hydroperoxy-(5Z,8Z,10E,14Z)-eicosatetraenoyl-alanine. It carries out the reaction N-(5Z,8Z,11Z,14Z)-eicosatetraenoyl-taurine + O2 = N-(15S)-hydroperoxy-(5Z,8Z,11Z,13E)-eicosatetraenoyl-taurine. The catalysed reaction is N-(5Z,8Z,11Z,14Z)-eicosatetraenoyl-gamma-aminobutanoate + O2 = N-(15S)-hydroperoxy-(5Z,8Z,11Z,13E)-eicosatetraenoyl-gamma-aminobutanoate. It catalyses the reaction N-(5Z,8Z,11Z,14Z)-eicosatetraenoyl-glycine + O2 = N-(15S)-hydroperoxy-(5Z,8Z,11Z,13E)-eicosatetraenoyl-glycine. The enzyme catalyses N-(5Z,8Z,11Z,14Z)-eicosatetraenoyl-L-alanine + O2 = N-(15S)-hydroperoxy-(5Z,8Z,11Z,13E)-eicosatetraenoyl-alanine. It functions in the pathway lipid metabolism; hydroperoxy eicosatetraenoic acid biosynthesis. Its function is as follows. Non-heme iron-containing dioxygenase that catalyzes the stereo-specific peroxidation of free and esterified polyunsaturated fatty acids generating a spectrum of bioactive lipid mediators. It inserts peroxyl groups at C12 or C15 of arachidonate ((5Z,8Z,11Z,14Z)-eicosatetraenoate) producing both 12-hydroperoxyeicosatetraenoate/12-HPETE and 15-hydroperoxyeicosatetraenoate/15-HPETE. It may then act on 12-HPETE to produce hepoxilins, which may show pro-inflammatory properties. Can also peroxidize linoleate ((9Z,12Z)-octadecadienoate) to 13-hydroperoxyoctadecadienoate. May participate in the sequential oxidations of DHA ((4Z,7Z,10Z,13Z,16Z,19Z)-docosahexaenoate) to generate specialized pro-resolving mediators (SPMs)like resolvin D5 ((7S,17S)-diHPDHA) and (7S,14S)-diHPDHA, that actively down-regulate the immune response and have anti-aggregation properties with platelets. Can convert epoxy fatty acids to hydroperoxy-epoxides derivatives followed by an intramolecular nucleophilic substitution leading to the formation of monocyclic endoperoxides. Plays an important role during the maintenance of self-tolerance by peroxidizing membrane-bound phosphatidylethanolamine which can then signal the sorting process for clearance of apoptotic cells during inflammation and prevent an autoimmune response. In addition to its role in the immune and inflammatory responses, this enzyme may play a role in epithelial wound healing in the cornea through production of lipoxin A4 (LXA(4)) and docosahexaenoic acid-derived neuroprotectin D1 (NPD1; 10R,17S-HDHA), both lipid autacoids exhibit anti-inflammatory and neuroprotective properties. Furthermore, it may regulate actin polymerization which is crucial for several biological processes such as the phagocytosis of apoptotic cells. It is also implicated in the generation of endogenous ligands for peroxisome proliferator activated receptor (PPAR-gamma), hence modulating macrophage development and function. It may also exert a negative effect on skeletal development by regulating bone mass through this pathway. As well as participates in ER stress and downstream inflammation in adipocytes, pancreatic islets, and liver. Finally, it is also involved in the cellular response to IL13/interleukin-13. The chain is Polyunsaturated fatty acid lipoxygenase ALOX15 from Pongo abelii (Sumatran orangutan).